A 641-amino-acid polypeptide reads, in one-letter code: Probable potassium transport system protein Kup (641 aa).

The segment covering Met-1–Gly-14 has biased composition (polar residues). The segment at Met-1–Asp-20 is disordered. The next 12 helical transmembrane spans lie at Leu-29–Phe-49, Ile-69–Ile-89, Val-120–Pro-140, Pro-156–Val-176, Phe-188–Ile-208, Val-236–His-256, Phe-267–Leu-287, Leu-307–Phe-327, Val-355–Phe-375, Ala-384–Met-404, Trp-410–Phe-430, and Ile-437–Thr-457.

This sequence belongs to the HAK/KUP transporter (TC 2.A.72) family.

Its subcellular location is the cell inner membrane. The enzyme catalyses K(+)(in) + H(+)(in) = K(+)(out) + H(+)(out). Its function is as follows. Transport of potassium into the cell. Likely operates as a K(+):H(+) symporter. This is Probable potassium transport system protein Kup from Nitrosomonas eutropha (strain DSM 101675 / C91 / Nm57).